Here is a 94-residue protein sequence, read N- to C-terminus: MSKTLTDPELQTALGSLHGWAKNGIAIERKYEFKDFLEAMKFVNKVADAAEAAGHHPDIQIVYSRVTLQLTSHDSGGVTHRDIKMAGRLNEIHP.

The protein belongs to the pterin-4-alpha-carbinolamine dehydratase family.

The catalysed reaction is (4aS,6R)-4a-hydroxy-L-erythro-5,6,7,8-tetrahydrobiopterin = (6R)-L-erythro-6,7-dihydrobiopterin + H2O. This Koribacter versatilis (strain Ellin345) protein is Putative pterin-4-alpha-carbinolamine dehydratase.